A 323-amino-acid polypeptide reads, in one-letter code: Phosphopantothenate--cysteine ligase 2 (323 aa).

Belongs to the PPC synthetase family. Homodimer.

The catalysed reaction is (R)-4'-phosphopantothenate + L-cysteine + CTP = N-[(R)-4-phosphopantothenoyl]-L-cysteine + CMP + diphosphate + H(+). Its pathway is cofactor biosynthesis; coenzyme A biosynthesis; CoA from (R)-pantothenate: step 2/5. Functionally, catalyzes the first step in the biosynthesis of coenzyme A from vitamin B5, where cysteine is conjugated to 4'-phosphopantothenate to form 4-phosphopantothenoylcysteine. The polypeptide is Phosphopantothenate--cysteine ligase 2 (Oryza sativa subsp. japonica (Rice)).